Reading from the N-terminus, the 39-residue chain is Photosystem II reaction center protein Psb30 (39 aa).

A helical transmembrane segment spans residues 12-32 (IFQLTFVALIMLAGPFVIFLL).

It belongs to the Psb30/Ycf12 family. PSII is composed of 1 copy each of membrane proteins PsbA, PsbB, PsbC, PsbD, PsbE, PsbF, PsbH, PsbI, PsbJ, PsbK, PsbL, PsbM, PsbT, PsbX, PsbY, PsbZ, Psb30/Ycf12, peripheral proteins PsbO, CyanoQ (PsbQ), PsbU, PsbV and a large number of cofactors. It forms dimeric complexes.

The protein resides in the cellular thylakoid membrane. Its function is as follows. A core subunit of photosystem II (PSII), probably helps stabilize the reaction center. The chain is Photosystem II reaction center protein Psb30 from Microcystis aeruginosa (strain NIES-843 / IAM M-2473).